Reading from the N-terminus, the 129-residue chain is Large ribosomal subunit protein bL19 (129 aa).

This sequence belongs to the bacterial ribosomal protein bL19 family.

Functionally, this protein is located at the 30S-50S ribosomal subunit interface and may play a role in the structure and function of the aminoacyl-tRNA binding site. This Burkholderia mallei (strain NCTC 10247) protein is Large ribosomal subunit protein bL19.